We begin with the raw amino-acid sequence, 175 residues long: Crossover junction endodeoxyribonuclease RuvC (175 aa).

Catalysis depends on residues Asp8, Glu67, and Asp139. Asp8, Glu67, and Asp139 together coordinate Mg(2+).

It belongs to the RuvC family. As to quaternary structure, homodimer which binds Holliday junction (HJ) DNA. The HJ becomes 2-fold symmetrical on binding to RuvC with unstacked arms; it has a different conformation from HJ DNA in complex with RuvA. In the full resolvosome a probable DNA-RuvA(4)-RuvB(12)-RuvC(2) complex forms which resolves the HJ. Requires Mg(2+) as cofactor.

It localises to the cytoplasm. It carries out the reaction Endonucleolytic cleavage at a junction such as a reciprocal single-stranded crossover between two homologous DNA duplexes (Holliday junction).. Its function is as follows. The RuvA-RuvB-RuvC complex processes Holliday junction (HJ) DNA during genetic recombination and DNA repair. Endonuclease that resolves HJ intermediates. Cleaves cruciform DNA by making single-stranded nicks across the HJ at symmetrical positions within the homologous arms, yielding a 5'-phosphate and a 3'-hydroxyl group; requires a central core of homology in the junction. The consensus cleavage sequence is 5'-(A/T)TT(C/G)-3'. Cleavage occurs on the 3'-side of the TT dinucleotide at the point of strand exchange. HJ branch migration catalyzed by RuvA-RuvB allows RuvC to scan DNA until it finds its consensus sequence, where it cleaves and resolves the cruciform DNA. This is Crossover junction endodeoxyribonuclease RuvC from Marinobacter nauticus (strain ATCC 700491 / DSM 11845 / VT8) (Marinobacter aquaeolei).